The chain runs to 569 residues: Glutamyl-tRNA reductase (569 aa).

Substrate-binding positions include 49–52 (TCNR), Ser-109, 114–116 (EGQ), and Gln-120. Cys-50 (nucleophile) is an active-site residue. An NADP(+)-binding site is contributed by 192-197 (GAGSMS). An insert region spans residues 284-397 (PVAVREETPA…VEAPRPAPAL (114 aa)). Positions 546-569 (AAVSRADDRDTSDSTENAKNRGRE) are disordered. Over residues 550-569 (RADDRDTSDSTENAKNRGRE) the composition is skewed to basic and acidic residues.

Belongs to the glutamyl-tRNA reductase family. As to quaternary structure, homodimer.

It catalyses the reaction (S)-4-amino-5-oxopentanoate + tRNA(Glu) + NADP(+) = L-glutamyl-tRNA(Glu) + NADPH + H(+). Its pathway is porphyrin-containing compound metabolism; protoporphyrin-IX biosynthesis; 5-aminolevulinate from L-glutamyl-tRNA(Glu): step 1/2. In terms of biological role, catalyzes the NADPH-dependent reduction of glutamyl-tRNA(Glu) to glutamate 1-semialdehyde (GSA). This is Glutamyl-tRNA reductase from Streptomyces avermitilis (strain ATCC 31267 / DSM 46492 / JCM 5070 / NBRC 14893 / NCIMB 12804 / NRRL 8165 / MA-4680).